We begin with the raw amino-acid sequence, 611 residues long: Leucine aminopeptidase (611 aa).

Residues 129 to 131 (QCQ) and 278 to 282 (GGMEN) contribute to the substrate site. Residue His-305 participates in Zn(2+) binding. Catalysis depends on Glu-306, which acts as the Proton acceptor. Zn(2+) contacts are provided by His-309 and Glu-328. Residue Tyr-393 is the Proton donor of the active site. Substrate is bound at residue 562–564 (RMK).

Belongs to the peptidase M1 family. Zn(2+) is required as a cofactor.

Its subcellular location is the cytoplasm. It carries out the reaction an epoxide + H2O = an ethanediol. Functionally, aminopeptidase that preferentially cleaves di- and tripeptides. Also has low epoxide hydrolase activity (in vitro). Can hydrolyze the epoxide leukotriene LTA(4) but it forms preferentially 5,6-dihydroxy-7,9,11,14-eicosatetraenoic acid rather than the cytokine leukotriene B(4) as the product compared to the homologous mammalian enzyme (in vitro). In Oryza sativa subsp. japonica (Rice), this protein is Leucine aminopeptidase (LKHA4).